Reading from the N-terminus, the 958-residue chain is Protein translocase subunit SecA (958 aa).

ATP is bound by residues Q86, 104–108 (GEGKT), and D494. Disordered regions lie at residues 863 to 883 (AAATGESAPAEPETDDEAEKT) and 902 to 937 (QPISHAEGKVPANKRPKSEELHSPWADGRTFPGTGK). Residues C941, C943, C952, and H953 each coordinate Zn(2+).

The protein belongs to the SecA family. In terms of assembly, monomer and homodimer. Part of the essential Sec protein translocation apparatus which comprises SecA, SecYEG and auxiliary proteins SecDF. Other proteins may also be involved. Requires Zn(2+) as cofactor.

It localises to the cell membrane. The protein resides in the cytoplasm. It carries out the reaction ATP + H2O + cellular proteinSide 1 = ADP + phosphate + cellular proteinSide 2.. In terms of biological role, part of the Sec protein translocase complex. Interacts with the SecYEG preprotein conducting channel. Has a central role in coupling the hydrolysis of ATP to the transfer of proteins into and across the cell membrane, serving as an ATP-driven molecular motor driving the stepwise translocation of polypeptide chains across the membrane. This chain is Protein translocase subunit SecA, found in Bifidobacterium adolescentis (strain ATCC 15703 / DSM 20083 / NCTC 11814 / E194a).